The sequence spans 128 residues: Fatty acid binding protein 1-B.1 (128 aa).

Belongs to the calycin superfamily. Fatty-acid binding protein (FABP) family. In terms of tissue distribution, expressed in the yolk syncytial layer (YSL) and subsequently in the intestinal bulb in developing embryos and larvae. In adults, expressed in the intestine.

Its subcellular location is the cytoplasm. Binds free fatty acids and their coenzyme A derivatives, bilirubin, and some other small molecules in the cytoplasm. May be involved in intracellular lipid transport. The protein is Fatty acid binding protein 1-B.1 (fabp1b.1) of Danio rerio (Zebrafish).